The chain runs to 255 residues: 5'-nucleotidase SurE (255 aa).

4 residues coordinate a divalent metal cation: aspartate 11, aspartate 12, serine 43, and asparagine 99.

This sequence belongs to the SurE nucleotidase family. It depends on a divalent metal cation as a cofactor.

The protein resides in the cytoplasm. The catalysed reaction is a ribonucleoside 5'-phosphate + H2O = a ribonucleoside + phosphate. In terms of biological role, nucleotidase that shows phosphatase activity on nucleoside 5'-monophosphates. This is 5'-nucleotidase SurE from Caldanaerobacter subterraneus subsp. tengcongensis (strain DSM 15242 / JCM 11007 / NBRC 100824 / MB4) (Thermoanaerobacter tengcongensis).